A 645-amino-acid polypeptide reads, in one-letter code: Threonine--tRNA ligase (645 aa).

The TGS domain occupies 3–64 (DMINITFPDG…EQDGTITIVT (62 aa)). The tract at residues 247-544 (DHRKLGKELG…LLEEYKGAFP (298 aa)) is catalytic. Zn(2+) is bound by residues C340, H391, and H521.

Belongs to the class-II aminoacyl-tRNA synthetase family. As to quaternary structure, homodimer. Zn(2+) is required as a cofactor.

The protein localises to the cytoplasm. The enzyme catalyses tRNA(Thr) + L-threonine + ATP = L-threonyl-tRNA(Thr) + AMP + diphosphate + H(+). In terms of biological role, catalyzes the attachment of threonine to tRNA(Thr) in a two-step reaction: L-threonine is first activated by ATP to form Thr-AMP and then transferred to the acceptor end of tRNA(Thr). Also edits incorrectly charged L-seryl-tRNA(Thr). The polypeptide is Threonine--tRNA ligase (Halalkalibacterium halodurans (strain ATCC BAA-125 / DSM 18197 / FERM 7344 / JCM 9153 / C-125) (Bacillus halodurans)).